Consider the following 557-residue polypeptide: Membrane protein insertase YidC (557 aa).

The next 5 membrane-spanning stretches (helical) occupy residues 3-23 (IKRT…FDNW), 363-383 (FVGN…AVFF), 437-457 (LPVV…LASV), 476-496 (PYFI…KLNP), and 507-527 (MMFM…GLVL).

This sequence belongs to the OXA1/ALB3/YidC family. Type 1 subfamily. In terms of assembly, interacts with the Sec translocase complex via SecD. Specifically interacts with transmembrane segments of nascent integral membrane proteins during membrane integration.

The protein resides in the cell inner membrane. In terms of biological role, required for the insertion and/or proper folding and/or complex formation of integral membrane proteins into the membrane. Involved in integration of membrane proteins that insert both dependently and independently of the Sec translocase complex, as well as at least some lipoproteins. Aids folding of multispanning membrane proteins. The polypeptide is Membrane protein insertase YidC (Burkholderia thailandensis (strain ATCC 700388 / DSM 13276 / CCUG 48851 / CIP 106301 / E264)).